We begin with the raw amino-acid sequence, 164 residues long: Lipoprotein signal peptidase (164 aa).

3 helical membrane passes run 12 to 32, 70 to 90, and 102 to 122; these read WLWL…LILQ, WFFA…MYRL, and ALII…GFVV. Residues aspartate 123 and aspartate 141 contribute to the active site. Residues 137-157 form a helical membrane-spanning segment; the sequence is FNLADTAICVGAALIVLEGFL.

It belongs to the peptidase A8 family.

The protein resides in the cell inner membrane. It carries out the reaction Release of signal peptides from bacterial membrane prolipoproteins. Hydrolyzes -Xaa-Yaa-Zaa-|-(S,diacylglyceryl)Cys-, in which Xaa is hydrophobic (preferably Leu), and Yaa (Ala or Ser) and Zaa (Gly or Ala) have small, neutral side chains.. It functions in the pathway protein modification; lipoprotein biosynthesis (signal peptide cleavage). This protein specifically catalyzes the removal of signal peptides from prolipoproteins. In Shigella boydii serotype 4 (strain Sb227), this protein is Lipoprotein signal peptidase.